A 223-amino-acid chain; its full sequence is Interleukin-12 subunit alpha (223 aa).

Residues 1–23 (MCPSARSLLLLASLVLLEHLGSA) form the signal peptide. 4 N-linked (GlcNAc...) asparagine glycosylation sites follow: Asn-41, Asn-79, Asn-121, and Asn-176. 2 disulfides stabilise this stretch: Cys-66-Cys-200 and Cys-87-Cys-125.

Belongs to the IL-6 superfamily. Heterodimer with IL12B; disulfide-linked. This heterodimer is known as interleukin IL-12. Heterodimer with EBI3/IL27B; not disulfide-linked. This heterodimer is known as interleukin IL-35. Interacts with NBR1; this interaction promotes IL-12 secretion.

The protein resides in the secreted. Functionally, heterodimerizes with IL12B to form the IL-12 cytokine or with EBI3/IL27B to form the IL-35 cytokine. IL-12 is primarily produced by professional antigen-presenting cells (APCs) such as B-cells and dendritic cells (DCs) as well as macrophages and granulocytes and regulates T-cell and natural killer-cell responses, induces the production of interferon-gamma (IFN-gamma), favors the differentiation of T-helper 1 (Th1) cells and is an important link between innate resistance and adaptive immunity. Mechanistically, exerts its biological effects through a receptor composed of IL12R1 and IL12R2 subunits. Binding to the receptor results in the rapid tyrosine phosphorylation of a number of cellular substrates including the JAK family kinases TYK2 and JAK2. In turn, recruited STAT4 gets phosphorylated and translocates to the nucleus where it regulates cytokine/growth factor responsive genes. As part of IL-35, plays essential roles in maintaining the immune homeostasis of the liver microenvironment and also functions as an immune-suppressive cytokine. Mediates biological events through unconventional receptors composed of IL12RB2 and gp130/IL6ST heterodimers or homodimers. Signaling requires the transcription factors STAT1 and STAT4, which form a unique heterodimer that binds to distinct DNA sites. In Marmota monax (Woodchuck), this protein is Interleukin-12 subunit alpha (IL12A).